Here is a 133-residue protein sequence, read N- to C-terminus: Profilin-1 (133 aa).

It belongs to the profilin family. Occurs in many kinds of cells as a complex with monomeric actin in a 1:1 ratio. Ubiquitous.

It localises to the cytoplasm. The protein localises to the cytoskeleton. Functionally, binds to actin and affects the structure of the cytoskeleton. At high concentrations, profilin prevents the polymerization of actin, whereas it enhances it at low concentrations. By binding to PIP2, it inhibits the formation of IP3 and DG. The polypeptide is Profilin-1 (PRO1) (Solanum lycopersicum (Tomato)).